A 167-amino-acid chain; its full sequence is NADH-quinone oxidoreductase subunit B (167 aa).

The [4Fe-4S] cluster site is built by Cys40, Cys41, Cys105, and Cys135.

The protein belongs to the complex I 20 kDa subunit family. As to quaternary structure, NDH-1 is composed of 14 different subunits. Subunits NuoB, C, D, E, F, and G constitute the peripheral sector of the complex. [4Fe-4S] cluster is required as a cofactor.

It localises to the cell inner membrane. It carries out the reaction a quinone + NADH + 5 H(+)(in) = a quinol + NAD(+) + 4 H(+)(out). NDH-1 shuttles electrons from NADH, via FMN and iron-sulfur (Fe-S) centers, to quinones in the respiratory chain. The immediate electron acceptor for the enzyme in this species is believed to be ubiquinone. Couples the redox reaction to proton translocation (for every two electrons transferred, four hydrogen ions are translocated across the cytoplasmic membrane), and thus conserves the redox energy in a proton gradient. The sequence is that of NADH-quinone oxidoreductase subunit B from Magnetococcus marinus (strain ATCC BAA-1437 / JCM 17883 / MC-1).